A 245-amino-acid chain; its full sequence is Probable transcriptional regulatory protein MAG6590 (245 aa).

The protein belongs to the TACO1 family.

The protein localises to the cytoplasm. The protein is Probable transcriptional regulatory protein MAG6590 of Mycoplasmopsis agalactiae (strain NCTC 10123 / CIP 59.7 / PG2) (Mycoplasma agalactiae).